Here is a 691-residue protein sequence, read N- to C-terminus: Homeobox protein NOBOX (691 aa).

Residues 94 to 103 (ELTRGQKAGE) are compositionally biased toward basic and acidic residues. The segment at 94–233 (ELTRGQKAGE…NSARATHNPV (140 aa)) is disordered. Residues 216–228 (PTSSPGAPNSARA) are compositionally biased toward polar residues. Residues 272–363 (RKKTRTLYRS…NRRAKWRKME (92 aa)) constitute a DNA-binding region (homeobox). 3 disordered regions span residues 366–385 (NGKE…SQCS), 394–437 (VPME…AQRV), and 635–691 (QALG…SHVP). Over residues 395-405 (PMEPKPDPFPQ) the composition is skewed to pro residues. Residues 420–432 (TSDQTLAPTQPSE) show a composition bias toward polar residues. Positions 679-691 (EEARGDDKNSHVP) are enriched in basic and acidic residues.

As to expression, expressed in ovaries, testes and pancreas. Expressed within all stages of the adult female germline, from primordial follicles through to MII oocytes.

Its subcellular location is the nucleus. Transcription factor which may play a role in oogenesis. Binds preferentially to the DNA sequences 5'-TAATTG-3', 5'-TAGTTG-3' and 5'-TAATTA-3'. The sequence is that of Homeobox protein NOBOX (NOBOX) from Homo sapiens (Human).